Reading from the N-terminus, the 417-residue chain is Phosphoglycerate kinase 2 (417 aa).

Serine 2 is subject to N-acetylserine. Serine 2 and serine 4 each carry phosphoserine. N6-acetyllysine is present on lysine 11. (2R)-3-phosphoglycerate is bound by residues valine 23, aspartate 24, phenylalanine 25, asparagine 26, glutamine 38, and arginine 39. Lysine 48 is subject to N6-acetyllysine. Positions 62, 63, 65, and 66 each coordinate (2R)-3-phosphoglycerate. N6-acetyllysine occurs at positions 75, 86, and 97. Leucine 122 and arginine 123 together coordinate (2R)-3-phosphoglycerate. 2 positions are modified to N6-acetyllysine: lysine 131 and lysine 146. 2 residues coordinate (2R)-3-phosphoglycerate: histidine 170 and arginine 171. At tyrosine 196 the chain carries Phosphotyrosine. The residue at position 199 (lysine 199) is an N6-acetyllysine. ADP is bound at residue glycine 214. Glycine 214 is a binding site for CDP. Residues alanine 215 and lysine 216 each coordinate AMP. Position 215 (alanine 215) interacts with ATP. Alanine 215 lines the Mg(2+) pocket. Mg(2+) is bound by residues alanine 218 and aspartate 219. Aspartate 219 contacts CDP. Lysine 220 contributes to the AMP binding site. Lysine 220 provides a ligand contact to ATP. ADP is bound at residue glycine 238. Position 238 (glycine 238) interacts with CDP. Glycine 239 provides a ligand contact to AMP. Glycine 239 provides a ligand contact to ATP. N6-acetyllysine occurs at positions 267 and 291. Residue glycine 313 participates in AMP binding. ATP is bound at residue glycine 313. The CDP site is built by glycine 338 and phenylalanine 343. Phenylalanine 343 contributes to the ADP binding site. Glutamate 344 is an AMP binding site. Residues glutamate 344, aspartate 375, and threonine 376 each contribute to the ATP site. Position 375 (aspartate 375) interacts with Mg(2+).

The protein belongs to the phosphoglycerate kinase family. Monomer. It depends on Mg(2+) as a cofactor. Mainly found in round spermatids. Localized on the principle piece in the sperm (at protein level). Testis-specific. Expression significantly decreased in the testis of elderly men.

It localises to the cytoplasm. It catalyses the reaction (2R)-3-phosphoglycerate + ATP = (2R)-3-phospho-glyceroyl phosphate + ADP. Its pathway is carbohydrate degradation; glycolysis; pyruvate from D-glyceraldehyde 3-phosphate: step 2/5. Essential for sperm motility and male fertility. Not required for the completion of spermatogenesis. The protein is Phosphoglycerate kinase 2 (PGK2) of Homo sapiens (Human).